A 1633-amino-acid chain; its full sequence is Serine-aspartate repeat-containing protein F (1633 aa).

The N-terminal stretch at 1–45 is a signal peptide; it reads MKKRRQGPINKRVDFLSNKVNKYSIRKFTVGTASILVGATLMFGA. Residues 46–678 form a ligand binding A region region; that stretch reads ADNEAKAAED…GSSTAQGDNP (633 aa). The disordered stretch occupies residues 51–269; the sequence is KAAEDNQLES…SISTDSSVND (219 aa). Basic and acidic residues predominate over residues 61–74; the sequence is ASKEEQKGSRDNES. Polar residues-rich tracts occupy residues 85–99 and 146–168; these read GSHS…NNAT and PKTS…DNLN. Residues 175-184 are compositionally biased toward basic and acidic residues; it reads KESKTDEHST. Polar residues predominate over residues 186–226; it reads QAQMSTNKSNLDTNDSPTQSEKTSSQANNDSTDNQSAPSKQ. A compositionally biased stretch (basic and acidic residues) spans 227-253; sequence LDSKPSEQKVYKTKFNDEPTQDVEHTT. The segment covering 255–266 has biased composition (polar residues); sequence KLKTPSISTDSS. CNA-B domains are found at residues 679–797, 798–907, 908–1018, and 1019–1129; these read TYSL…YLTP, KYNV…FYKP, IYNL…YKTP, and KYSV…FDDD. Residues 679 to 1129 are type I collagen binding region; sequence TYSLGDYVWL…SIDNGYFDDD (451 aa). Residues 862-889 are disordered; that stretch reads FETPEGYTPTKQNSGSDEGKDSNGTKTT. The segment at 1085–1608 is disordered; it reads KPEGMTQTTA…ANEDHDSKGT (524 aa). Residues 1107–1119 show a composition bias toward basic and acidic residues; sequence EDVRVTITDHDDF. Residues 1125 to 1584 show a composition bias toward acidic residues; that stretch reads YFDDDSDSDS…DSDSDSDSDS (460 aa). Over residues 1585 to 1606 the composition is skewed to basic and acidic residues; it reads DSDKNAKDKLPDTGANEDHDSK. The short motif at 1594 to 1598 is the LPXTG sorting signal element; sequence LPDTG. At T1597 the chain carries Pentaglycyl murein peptidoglycan amidated threonine. Residues 1598 to 1633 constitute a propeptide, removed by sortase; sequence GANEDHDSKGTLLGTLFAGLGALLLGRRRKKDNKEK.

It belongs to the serine-aspartate repeat-containing protein (SDr) family.

It localises to the secreted. It is found in the cell wall. Binds to type I collagen via alpha-2(I) or alpha-1(I) chains. The chain is Serine-aspartate repeat-containing protein F (sdrF) from Staphylococcus epidermidis (strain ATCC 12228 / FDA PCI 1200).